Reading from the N-terminus, the 362-residue chain is MGFTTSSVTDAIAALDERSKEIFRRIVEGYLENGEPLGSRNLSRLLPMSLSPASVRNVMSDLEELGLIYSPHISAGRLPTQIGLRFFVDAFMQVGDLSAEDRATIDRQVRGSNRDQPMESVMTEASRMLSGISRGAGLVITSKNDPVLKHVEFIRLEPTKALAVLVGDHDQVENRIIELPAGITSSQLTEAANFLNAHMTGQTLPDLRRQLLTLKESVRHELDTLSHELVERGIAVWSGGEDEGKPTQLIVRGHANLLTEVGGAEDLDRLRLLFDDLEKKDSLIEILNLAESGPGVRIFIGSENKLFSLSGSSLIVAPYRDDDDRIIGAVGVIGPTRLNYARIVPMVDYTAQLFSRMSRPGL.

It belongs to the HrcA family.

Negative regulator of class I heat shock genes (grpE-dnaK-dnaJ and groELS operons). Prevents heat-shock induction of these operons. The sequence is that of Heat-inducible transcription repressor HrcA from Rhizobium rhizogenes (strain K84 / ATCC BAA-868) (Agrobacterium radiobacter).